Here is a 249-residue protein sequence, read N- to C-terminus: UPF0246 protein EUBREC_1226 (249 aa).

The protein belongs to the UPF0246 family.

The polypeptide is UPF0246 protein EUBREC_1226 (Agathobacter rectalis (strain ATCC 33656 / DSM 3377 / JCM 17463 / KCTC 5835 / VPI 0990) (Eubacterium rectale)).